The following is a 121-amino-acid chain: Large ribosomal subunit protein uL18 (121 aa).

The protein belongs to the universal ribosomal protein uL18 family. In terms of assembly, part of the 50S ribosomal subunit; part of the 5S rRNA/L5/L18/L25 subcomplex. Contacts the 5S and 23S rRNAs.

Its function is as follows. This is one of the proteins that bind and probably mediate the attachment of the 5S RNA into the large ribosomal subunit, where it forms part of the central protuberance. This chain is Large ribosomal subunit protein uL18, found in Bordetella avium (strain 197N).